A 783-amino-acid chain; its full sequence is FYN-binding protein 1 (783 aa).

2 stretches are compositionally biased toward polar residues: residues 1–18 and 25–45; these read MAKY…SVNS and GPNS…QGNA. Residues 1–502 form a disordered region; that stretch reads MAKYNTGGNP…KEKKEQEIKK (502 aa). An N6-acetyllysine modification is found at Lys3. Phosphoserine occurs at positions 28 and 46. A compositionally biased stretch (basic and acidic residues) spans 69 to 79; that stretch reads SSEEKPDKEPK. Ser225 is subject to Phosphoserine. Composition is skewed to basic and acidic residues over residues 240–252 and 278–290; these read PARE…DHAG and NGEE…KIDA. Position 329 is a phosphoserine (Ser329). The segment covering 345 to 363 has biased composition (pro residues); the sequence is KPLPPLFTLGPPPPKPNRP. The interval 348 to 448 is interaction with SKAP1; it reads PPLFTLGPPP…QDGVTHSDGA (101 aa). A compositionally biased stretch (polar residues) spans 374-387; it reads TSSGNSTSKGQTSY. A compositionally biased stretch (pro residues) spans 392–424; the sequence is LPPPPPSHPASQPPLPASHPSQPPVPSLPPRNI. Positions 451–465 are enriched in acidic residues; it reads LDEEQDSEGETYEDI. Residues 456 to 507 adopt a coiled-coil conformation; the sequence is DSEGETYEDIEASKEREKKREKEEKKRLELEKKEQKEKEKKEQEIKKKFKLT. Ser457 carries the post-translational modification Phosphoserine. The SH2-binding signature appears at 462-465; the sequence is YEDI. Residues 466–501 show a composition bias toward basic and acidic residues; the sequence is EASKEREKKREKEEKKRLELEKKEQKEKEKKEQEIK. The Nuclear localization signal signature appears at 469–505; sequence KEREKKREKEEKKRLELEKKEQKEKEKKEQEIKKKFK. The 62-residue stretch at 511-572 folds into the SH3 1 domain; that stretch reads QVIHLAKACC…KTTAVEIDYD (62 aa). A Phosphotyrosine modification is found at Tyr571. Phosphoserine is present on residues Ser573 and Ser580. The SH2-binding; to LCP2 signature appears at 595–598; sequence YDDV. Residues 598–678 form a disordered region; sequence VAEQDDISSH…GTNVGKAKTE (81 aa). Composition is skewed to acidic residues over residues 620–635 and 646–656; these read PDDD…DADD and MGDEVYDDVDT. An SH2-binding; to FYN motif is present at residues 625-628; it reads YDGI. A Phosphotyrosine modification is found at Tyr651. A Nuclear localization signal motif is present at residues 674–700; it reads KAKTEEKDLKKLKKQEKEEKDFRKKFK. An SH3 2 domain is found at 700-768; sequence KYDGEIRVLY…LRSYLADNDG (69 aa).

Part of a complex consisting of SKAP2, FYB1 and PTPNS1. Part of a complex consisting of SKAP2, FYB1 and LILRB3. Part of a complex consisting of SKAP1, FYB1 and CLNK. Interacts with CLNK (via its SH2 domain); this interaction allows SKAP1 and FYB1 to recruit FYN to the complex, thus promoting the phosphorylation of CLNK by FYN. Interacts with FYN. Interacts with LCP2. Interacts with SKAP1. Interacts with SKAP2. Interacts with FASLG. Interacts with EVL. Interacts with TMEM47. Interacts with LCK. Post-translationally, T-cell receptor ligation leads to increased tyrosine phosphorylation. As to expression, expressed in hematopoietic tissues such as myeloid and T-cells, spleen and thymus. Not expressed in B-cells, nor in non-lymphoid tissues.

Its subcellular location is the cytoplasm. The protein localises to the nucleus. It localises to the cell junction. Functionally, acts as an adapter protein of the FYN and LCP2 signaling cascades in T-cells. May play a role in linking T-cell signaling to remodeling of the actin cytoskeleton. Modulates the expression of IL2. Involved in platelet activation. Prevents the degradation of SKAP1 and SKAP2. May be involved in high affinity immunoglobulin epsilon receptor signaling in mast cells. In Homo sapiens (Human), this protein is FYN-binding protein 1.